An 83-amino-acid polypeptide reads, in one-letter code: RNA-binding protein Hfq (83 aa).

Positions 9–68 constitute a Sm domain; the sequence is DPYLNALRKERIPVSIFLVNGIKLQGQIESFDQFVILLKNTVSQMVYKHAISTVVPARNV.

This sequence belongs to the Hfq family. As to quaternary structure, homohexamer.

Functionally, RNA chaperone that binds small regulatory RNA (sRNAs) and mRNAs to facilitate mRNA translational regulation in response to envelope stress, environmental stress and changes in metabolite concentrations. Also binds with high specificity to tRNAs. This Marinobacter nauticus (strain ATCC 700491 / DSM 11845 / VT8) (Marinobacter aquaeolei) protein is RNA-binding protein Hfq.